The following is a 390-amino-acid chain: Guanidine hydrolase (390 aa).

Positions 174, 199, 201, 203, 291, and 293 each coordinate Ni(2+).

Belongs to the arginase family. In terms of assembly, homohexamer. Requires Ni(2+) as cofactor.

It localises to the cytoplasm. The catalysed reaction is guanidine + H2O = urea + NH4(+). Activation of GdmH depends on the presence of the accessory proteins GhaA (Sll1078) and GhaB (Sll1079), which load nickel into the active site. Hydrolase activity is slightly activated in the presence of GTP. It does not require ATP or NAD(P)H. Addition of Ca(2+), Mn(2+), Fe(2+) or Fe(3+) has no consistent effects, whereas addition of Co(2+), Cu(2+) or Zn(2+) inhibits the activity. In terms of biological role, catalyzes the hydrolysis of guanidine into urea and ammonium. Is highly specific for free guanidine. At pH 8, also catalyzes the release of urea from methylguanidine but with significantly reduced specific activity compared with that for guanidine. Cannot hydrolyze guanidinoacetate, guanidinopropionate, guanidinobutyrate, agmatine, arginine or creatine. Required to use guanidine as the sole nitrogen source for growth. Overexpression of the gene accelerates guanidine degradation and promotes biomass growth. This Synechocystis sp. (strain ATCC 27184 / PCC 6803 / Kazusa) protein is Guanidine hydrolase.